A 38-amino-acid chain; its full sequence is Histidine decarboxylase small chain (38 aa).

Heterohexamer of 3 large and 3 small chains. The cofactor is pyruvate.

It catalyses the reaction L-histidine + H(+) = histamine + CO2. The sequence is that of Histidine decarboxylase small chain from Micrococcus sp.